The chain runs to 188 residues: uncharacterized protein (188 aa).

Its subcellular location is the plastid. It localises to the cyanelle. This is an uncharacterized protein from Cyanophora paradoxa.